A 139-amino-acid polypeptide reads, in one-letter code: Large ribosomal subunit protein uL16 (139 aa).

Over residues 1 to 16 (MLIPKRTKYRKQHRPD) the composition is skewed to basic residues. Residues 1–23 (MLIPKRTKYRKQHRPDRHGMSKG) form a disordered region.

This sequence belongs to the universal ribosomal protein uL16 family. As to quaternary structure, part of the 50S ribosomal subunit.

Binds 23S rRNA and is also seen to make contacts with the A and possibly P site tRNAs. The protein is Large ribosomal subunit protein uL16 of Bifidobacterium animalis subsp. lactis (strain AD011).